Consider the following 282-residue polypeptide: Protein OS-9 homolog (282 aa).

The signal sequence occupies residues 1-23 (MRITQILLCLVIVALSSSSHVWS). Asparagine 94 carries an N-linked (GlcNAc...) asparagine glycan. One can recognise an MRH domain in the interval 120-239 (EKCLFRQEGW…TVQCPTLCKH (120 aa)). A disulfide bond links cysteine 122 and cysteine 135. Residues tryptophan 129, tryptophan 130, and glutamine 142 each contribute to the a mannooligosaccharide derivative site. Residues asparagine 169 and asparagine 190 are each glycosylated (N-linked (GlcNAc...) asparagine). Intrachain disulfides connect cysteine 194–cysteine 225 and cysteine 209–cysteine 237. A mannooligosaccharide derivative contacts are provided by aspartate 195, arginine 201, glutamate 221, and tyrosine 227. A compositionally biased stretch (basic and acidic residues) spans 262–276 (DATRNKEEQAVDESP). Residues 262–282 (DATRNKEEQAVDESPKMIADS) form a disordered region.

The protein belongs to the OS-9 family. Interacts with HRD3A.

Its subcellular location is the endoplasmic reticulum. Functionally, lectin which functions in endoplasmic reticulum (ER) quality control and ER-associated degradation (ERAD). May bind terminally misfolded non-glycosylated proteins as well as improperly folded glycoproteins, retain them in the ER, and possibly transfer them to the ubiquitination machinery and promote their degradation. Targets the misfolded LRR receptor kinase BRI1 and the misfolded receptor-like kinase EFR. The protein is Protein OS-9 homolog of Arabidopsis thaliana (Mouse-ear cress).